A 586-amino-acid polypeptide reads, in one-letter code: Kinesin-like protein KIF25 (586 aa).

A coiled-coil region spans residues Ser10–Gln94. The 393-residue stretch at Asn173–Val565 folds into the Kinesin motor domain. Residue Gly267–Ser274 coordinates ATP. Disordered regions lie at residues Thr417–Ala460 and Gln564–Asp586.

This sequence belongs to the TRAFAC class myosin-kinesin ATPase superfamily. Kinesin family. As to quaternary structure, homotetramer.

Its subcellular location is the cytoplasm. It localises to the cytoskeleton. The protein localises to the microtubule organizing center. The protein resides in the centrosome. In terms of biological role, minus-end microtubule-dependent motor protein. Acts as a negative regulator of centrosome separation required to prevent premature centrosome separation during interphase. Required to maintain a centered nucleus to ensure that the spindle is stably oriented at the onset of mitosis. May also act as a negative regulator of amino acid starvation-induced autophagy. The protein is Kinesin-like protein KIF25 of Macaca fascicularis (Crab-eating macaque).